A 642-amino-acid polypeptide reads, in one-letter code: Threonine--tRNA ligase (642 aa).

Residues Met1–Thr61 enclose the TGS domain. The tract at residues Asp243–Pro534 is catalytic. An N6-acetyllysine modification is found at Lys286. Zn(2+) contacts are provided by Cys334, His385, and His511.

Belongs to the class-II aminoacyl-tRNA synthetase family. In terms of assembly, homodimer. It depends on Zn(2+) as a cofactor.

The protein localises to the cytoplasm. The catalysed reaction is tRNA(Thr) + L-threonine + ATP = L-threonyl-tRNA(Thr) + AMP + diphosphate + H(+). Its function is as follows. Catalyzes the attachment of threonine to tRNA(Thr) in a two-step reaction: L-threonine is first activated by ATP to form Thr-AMP and then transferred to the acceptor end of tRNA(Thr). Also edits incorrectly charged L-seryl-tRNA(Thr). In Escherichia coli O8 (strain IAI1), this protein is Threonine--tRNA ligase.